Here is a 104-residue protein sequence, read N- to C-terminus: ATP-dependent Clp protease adapter protein ClpS (104 aa).

It belongs to the ClpS family. As to quaternary structure, binds to the N-terminal domain of the chaperone ClpA.

Involved in the modulation of the specificity of the ClpAP-mediated ATP-dependent protein degradation. This Burkholderia ambifaria (strain MC40-6) protein is ATP-dependent Clp protease adapter protein ClpS.